The following is a 985-amino-acid chain: MGEHGGLVDLLDSDLEYSINRETPDKNNCLSQQSVNDSHLTAKTGGLNARSFLSTLSDDSLIEYVNQLSQTNKNNSNPTAGTLRFTTKNISCDELHADLGGGEDSPIARSVIEIQESDSNGDDVKKNTVYTREAYFHEKAHGQTLQDQILKDQYKDQISSQSSKIFKNCVIYINGYTKPGRLQLHEMIVLHGGKFLHYLSSKKTVTHIVASNLPLKKRIEFANYKVVSPDWIVDSVKEARLLPWQNYSLTSKLDEQQKKLDNCKTVNSIPLPSETSLHKGSKCVGSALLPVEQQSPVNLNNLEAKRIVACDDPDFLTSYFAHSRLHHLSAWKANLKDKFLNENIHKYTKITDKDTYIIFHIDFDCFFATVAYLCRSSSFSACDFKRDPIVVCHGTKNSDIASCNYVARSYGIKNGMWVSQAEKMLPNGIKLISLPYTFEQFQLKSEAFYSTLKRLNIFNLILPISIDEAVCVRIIPDNIHNTNTLNARLCEEIRQEIFQGTNGCTVSIGCSDSLVLARLALKMAKPNGYNITFKSNLSEEFWSSFKLDDLPGVGHSTLSRLESTFDSPHSLNDLRKRYTLDALKASVGSKLGMKIHLALQGQDDEESLKILYDPKEVLQRKSLSIDINWGIRFKNITQVDLFIERGCQYLLEKLNEINKTTSQITLKLMRRCKDAPIEPPKYMGMGRCDSFSRSSRLGIPTNEFGIIATEMKSLYRTLGCPPMELRGLALQFNKLVDVGPDNNQLKLRLPFKTIVTNRAFEALPEDVKNDINNEFEKRNYKRKESGLTSNSLSSKKKGFAISRLEVNDLPSTMEEQFMNELPTQIRAEVRHDLRIQKKIQQTKLGNLQEKIKRREESLQNEKNHFMGQNSIFQPIKFQNLTRFKKICQLVKQWVAETLGDGGPHEKDVKLFVKYLIKLCDSNRVHLVLHLSNLISRELNLCAFLNQDHSGFQTWERILLNDIIPLLNRNKHTYQTVRKLDMDFEV.

The BRCT domain maps to 161–249; that stretch reads QSSKIFKNCV…RLLPWQNYSL (89 aa). The interval 319–329 is interaction with target DNA; it reads YFAHSRLHHLS. Residues Arg-324 and 362-366 contribute to the dCTP site; that span reads DFDCF. In terms of domain architecture, UmuC spans 358–554; sequence IFHIDFDCFF…FKLDDLPGVG (197 aa). Residues Asp-362 and Phe-363 each contribute to the Mg(2+) site. An interaction with target DNA region spans residues 395 to 397; it reads TKN. Residues 402–408, Asn-414, and Asp-467 contribute to the dCTP site; that span reads SCNYVAR. Mg(2+) is bound by residues Asp-467 and Glu-468. Interaction with target DNA regions lie at residues 554–557 and 620–628; these read GHST and RKSLSIDIN.

Belongs to the DNA polymerase type-Y family. Interacts with REV7. Mg(2+) is required as a cofactor.

It is found in the nucleus. The protein localises to the mitochondrion. Deoxycytidyl transferase involved in DNA repair. Transfers a dCMP residue from dCTP to the 3'-end of a DNA primer in a template-dependent reaction. May assist in the first step in the bypass of abasic lesions by the insertion of a nucleotide opposite the lesion. Required for normal induction of mutations by physical and chemical agents. Involved in mitochondrial DNA mutagenesis. The polypeptide is DNA repair protein REV1 (REV1) (Saccharomyces cerevisiae (strain ATCC 204508 / S288c) (Baker's yeast)).